Here is a 1445-residue protein sequence, read N- to C-terminus: DNA-directed RNA polymerase subunit beta'' (1445 aa).

Residues C220, C293, C300, and C303 each coordinate Zn(2+).

Belongs to the RNA polymerase beta' chain family. RpoC2 subfamily. In terms of assembly, in plastids the minimal PEP RNA polymerase catalytic core is composed of four subunits: alpha, beta, beta', and beta''. When a (nuclear-encoded) sigma factor is associated with the core the holoenzyme is formed, which can initiate transcription. Zn(2+) is required as a cofactor.

It localises to the plastid. It is found in the chloroplast. The enzyme catalyses RNA(n) + a ribonucleoside 5'-triphosphate = RNA(n+1) + diphosphate. Its function is as follows. DNA-dependent RNA polymerase catalyzes the transcription of DNA into RNA using the four ribonucleoside triphosphates as substrates. The protein is DNA-directed RNA polymerase subunit beta'' of Anthoceros angustus (Hornwort).